Reading from the N-terminus, the 439-residue chain is D-erythronate kinase (439 aa).

ATP contacts are provided by residues serine 253, glycine 366–valine 369, and glycine 412.

It belongs to the four-carbon acid sugar kinase family.

It catalyses the reaction D-erythronate + ATP = 4-phospho-D-erythronate + ADP + H(+). Its function is as follows. Catalyzes the ATP-dependent phosphorylation of D-erythronate to D-erythronate 4-phosphate. Can also phosphorylate D-threonate and 4-hydroxy-L-threonine, with lower efficiency. The polypeptide is D-erythronate kinase (Heliobacterium modesticaldum (strain ATCC 51547 / Ice1)).